The following is a 342-amino-acid chain: Muscleblind-like protein 3 (342 aa).

4 consecutive C3H1-type zinc fingers follow at residues 14 to 42 (WLTLEVCREFQRGTCSRADAECRFAHPPR), 48 to 74 (NGRVVACFDSLKGRCTRENCKYLHPPP), 174 to 202 (TDRLEVCREFQRGNCTRGESECRYAHPTD), and 210 to 236 (DNSVTICMDYIKGRCSREKCKYFHPPP). Low complexity predominate over residues 316 to 326 (PSTVSTATPPA). The tract at residues 316-342 (PSTVSTATPPASNVPYVPTTTGNQLKY) is disordered. Residues 333–342 (PTTTGNQLKY) are compositionally biased toward polar residues.

It belongs to the muscleblind family.

It localises to the nucleus. It is found in the cytoplasm. In terms of biological role, mediates pre-mRNA alternative splicing regulation. Acts either as activator or repressor of splicing on specific pre-mRNA targets. Inhibits cardiac troponin-T (TNNT2) pre-mRNA exon inclusion but induces insulin receptor (IR) pre-mRNA exon inclusion in muscle. Antagonizes the alternative splicing activity pattern of CELF proteins. Could inhibit terminal muscle differentiation, acting at approximately the time of myogenin induction. This is Muscleblind-like protein 3 (Mbnl3) from Mus musculus (Mouse).